The chain runs to 235 residues: RNA polymerase sigma factor SigI7 (235 aa).

A Polymerase core binding motif is present at residues 49 to 62 (DELSIALMAFVETI). Residues 191–210 (VAEIEQSLKIPRKTIERARK) constitute a DNA-binding region (H-T-H motif).

The protein belongs to the sigma-70 factor family. SigI subfamily. As to quaternary structure, interacts with RsgI7.

The protein localises to the cytoplasm. With respect to regulation, negatively regulated by the anti-sigma-I factor RsgI7. In terms of biological role, sigma factors are initiation factors that promote the attachment of RNA polymerase to specific initiation sites and are then released. In Acetivibrio thermocellus (strain ATCC 27405 / DSM 1237 / JCM 9322 / NBRC 103400 / NCIMB 10682 / NRRL B-4536 / VPI 7372) (Clostridium thermocellum), this protein is RNA polymerase sigma factor SigI7.